Here is a 180-residue protein sequence, read N- to C-terminus: Large ribosomal subunit protein uL10 (180 aa).

Belongs to the universal ribosomal protein uL10 family. Part of the ribosomal stalk of the 50S ribosomal subunit. The N-terminus interacts with L11 and the large rRNA to form the base of the stalk. The C-terminus forms an elongated spine to which L12 dimers bind in a sequential fashion forming a multimeric L10(L12)X complex.

Its function is as follows. Forms part of the ribosomal stalk, playing a central role in the interaction of the ribosome with GTP-bound translation factors. In Treponema pallidum (strain Nichols), this protein is Large ribosomal subunit protein uL10 (rplJ).